The primary structure comprises 122 residues: Large ribosomal subunit protein uL14 (122 aa).

It belongs to the universal ribosomal protein uL14 family. In terms of assembly, part of the 50S ribosomal subunit. Forms a cluster with proteins L3 and L19. In the 70S ribosome, L14 and L19 interact and together make contacts with the 16S rRNA in bridges B5 and B8.

Its function is as follows. Binds to 23S rRNA. Forms part of two intersubunit bridges in the 70S ribosome. The protein is Large ribosomal subunit protein uL14 of Carboxydothermus hydrogenoformans (strain ATCC BAA-161 / DSM 6008 / Z-2901).